The sequence spans 159 residues: MSYSITTPSQFVFLSSAWADPIELINLCTNALGNQFQTQQARTVVQRQFSEVWKPSPQVTVRFPDSDFKVYRYNAVLDPLVTALLGAFDTRNRIIEVENQANPTTAETLDATRRVDDATVAIRSAINNLIVELIRGTGSYNRSSFESSSGLVWTSGPAT.

At S2 the chain carries N-acetylserine; by host.

It belongs to the virgaviridae capsid protein family.

The protein localises to the virion. Capsid protein self-assembles to form rod-shaped virions about 18 nm in diameter with a central canal enclosing the viral genomic RNA. In Nicotiana tabacum (Common tobacco), this protein is Capsid protein (CP).